A 559-amino-acid chain; its full sequence is NXPE family member 2 (559 aa).

Residues alanine 17 to leucine 37 traverse the membrane as a helical segment.

This sequence belongs to the NXPE family.

The protein resides in the membrane. In Homo sapiens (Human), this protein is NXPE family member 2 (NXPE2).